The primary structure comprises 859 residues: Leucine--tRNA ligase (859 aa).

Positions 42–52 match the 'HIGH' region motif; sequence PYPSGRLHMGH. The short motif at 618-622 is the 'KMSKS' region element; that stretch reads KMSKS. K621 is an ATP binding site.

It belongs to the class-I aminoacyl-tRNA synthetase family.

The protein resides in the cytoplasm. It carries out the reaction tRNA(Leu) + L-leucine + ATP = L-leucyl-tRNA(Leu) + AMP + diphosphate. The sequence is that of Leucine--tRNA ligase from Shewanella baltica (strain OS185).